Reading from the N-terminus, the 335-residue chain is tRNA-dihydrouridine(20/20a) synthase (335 aa).

Residues 20–22 (PML) and glutamine 72 each bind FMN. Cysteine 102 acts as the Proton donor in catalysis. Residues lysine 141, histidine 173, 213-215 (NGG), and 235-236 (GR) each bind FMN.

Belongs to the Dus family. DusA subfamily. FMN is required as a cofactor.

The enzyme catalyses 5,6-dihydrouridine(20) in tRNA + NADP(+) = uridine(20) in tRNA + NADPH + H(+). It carries out the reaction 5,6-dihydrouridine(20) in tRNA + NAD(+) = uridine(20) in tRNA + NADH + H(+). The catalysed reaction is 5,6-dihydrouridine(20a) in tRNA + NADP(+) = uridine(20a) in tRNA + NADPH + H(+). It catalyses the reaction 5,6-dihydrouridine(20a) in tRNA + NAD(+) = uridine(20a) in tRNA + NADH + H(+). In terms of biological role, catalyzes the synthesis of 5,6-dihydrouridine (D), a modified base found in the D-loop of most tRNAs, via the reduction of the C5-C6 double bond in target uridines. Specifically modifies U20 and U20a in tRNAs. This Shewanella oneidensis (strain ATCC 700550 / JCM 31522 / CIP 106686 / LMG 19005 / NCIMB 14063 / MR-1) protein is tRNA-dihydrouridine(20/20a) synthase.